A 250-amino-acid polypeptide reads, in one-letter code: AA9 family lytic polysaccharide monooxygenase F (250 aa).

Positions 1–21 (MAMSKIATLAGLLASAGLVAG) are cleaved as a signal peptide. H22 is a binding site for Cu(2+). D51 is a binding site for O2. Disulfide bonds link C77/C200 and C121/C125. H107 lines the Cu(2+) pocket. Residues H186 and Q195 each contribute to the O2 site. Cu(2+) is bound at residue Y197.

Belongs to the glycosyl hydrolase 61 family. Cu(2+) serves as cofactor.

The protein localises to the secreted. The enzyme catalyses Endohydrolysis of (1-&gt;4)-beta-D-glucosidic linkages in cellulose, lichenin and cereal beta-D-glucans.. Lytic polysaccharide monooxygenase (LMPO) that depolymerizes crystalline and amorphous polysaccharides via the oxidation of scissile alpha- or beta-(1-4)-glycosidic bonds, yielding C1 or C4 oxidation products. Catalysis by LPMOs requires the reduction of the active-site copper from Cu(II) to Cu(I) by a reducing agent and H(2)O(2) or O(2) as a cosubstrate. Major secreted component of the extracellular cellulolytic system. This Emericella nidulans (strain FGSC A4 / ATCC 38163 / CBS 112.46 / NRRL 194 / M139) (Aspergillus nidulans) protein is AA9 family lytic polysaccharide monooxygenase F.